Consider the following 120-residue polypeptide: Large ribosomal subunit protein uL18 (120 aa).

Belongs to the universal ribosomal protein uL18 family. Part of the 50S ribosomal subunit; part of the 5S rRNA/L5/L18/L25 subcomplex. Contacts the 5S and 23S rRNAs.

Functionally, this is one of the proteins that bind and probably mediate the attachment of the 5S RNA into the large ribosomal subunit, where it forms part of the central protuberance. The sequence is that of Large ribosomal subunit protein uL18 from Bacillus cereus (strain ATCC 10987 / NRS 248).